A 2092-amino-acid polypeptide reads, in one-letter code: MDSILSKQLVDKTGFVRVPIKHFDCTMLTLALPTFDVSKMVDRITIDFNLDDIQGASEIGSTLLPSMSIDVEDMANFVHDFTFGHLADKTDRLLMREFPMMNDGFDHLSPDMIIKTTSGMYNIVEFTTFRGDERGAFQAAMTKLAKYEVPCENRSQGRTVVLYVVSAYRHGVWSNLELEDSEAEEMVYRYRLALSVMDELRTLFPELSSTDEELGKTERELLAMVSSIQINWSVTESVFPPFSREMFDRFRSSPPDSEYITRIVSRCLINSQEKLINSSFFAEGNDKALRFSKNAEECSLAVERALNQYRAEDNLRDLNDHKSTIQLPPWLSYHDVDGKDLCPLQGLDVRGDHPMCNLWREVVTSANLEEIERMHDDAAAELEFALSGVKDRPDERNRYHRVHLNMGSDDSVYIAALGVNGKKHKADTLVQQMRDRSKQPFSPDHDVDHISEFLSACSSDLWATDEDLYNPLSCDKELRLAAQRIHQPSLSERGFNEIITEHYKFMGSRIGSWCQMVSLIGAELSASVKQHVKPNYFVIKRLLGSGIFLLIKPTSSKSHIFVSFAIKRSCWAFDLSTSRVFKPYIDAGDLLVTDFVSYKLSKLTNLCKCVSLMESSFSFWAEAFGIPSWNFVGDLFRSSDSAAMDASYMGKLSLLTLLEDKAATEELQTIARYIIMEGFVSPPEIPKPHKMTSKFPKVLRSELQVYLLNCLCRTIQRIAGEPFILKKKDGSISWGGMFNPFSGRPLLDMQPLISCCYNGYFKNKEEETEPSSLSGMYKKIIELEHLRPQSDAFLGYKDPELPRMHEFSVSYLKEACNHAKLVLRSLYGQNFMEQIDNQIIRELSGLTLERLATLKATSNFNENWYVYKDVADKNYTRDKLLVKMSKYASEGKSLAIQKFEDCMRQIESQGCMHICLFKKQQHGGLREIYVMGAEERIVQSVVETIARSIGKFFASDTLCNPPNKVKIPETHGIRARKQCKGPVWTCATSDDARKWNQGHFVTKFALMLCEFTSPKWWPLIIRGCSMFTRKRMMMNLNYLKILDGHRELDIRDDFVMDLFKAYHGEAEVPWAFKGKTYLETTTGMMQGILHYTSSLLHTIHQEYIRSLSFKIFNLKVAPEMSKGLVCDMMQGSDDSSMLISFPADDEKVLTRCKVAAAICFRMKKELGVYLAIYPSEKSTANTDFVMEYNSEFYFHTQHVRPTIRWIAACCSLPEVETLVARQEEASNLMTSVTEGGGSFSLAAMIQQAQCTLHYMLMGMGVSELFLEYKKAVLKWNDPGLGFFLLDNPYACGLGGFRFNLFKAITRTDLQKLYAFFMKKVKGSAARDWADEDVTIPETCSVSPGGALILSSSLKWGSRKKFQKLRDRLNIPENWIELINENPEVLYRAPRTGPEILLRIAEKVHSPGVVSSLSSGNAVCKVMASAVYFLSATIFEDTGRPEFNFLEDSKYSLLQKMAAYSGFHGFNDMEPEDILFLFPNIEELESLDSIVYNKGEIDIIPRVNIRDATQTRVTIFNEQKTLRTSPEKLVSDKWFGTQKSRIGKTTFLAEWEKLKKIVKWLEDTPEATLAHTPLNNHIQVRNFFARMESKPRTVRITGAPVKKRSGVSKIAMVIRDNFSRMGHLRGVEDLAGFTRSVSAEILKHFLFCILQGPYSESYKLQLIYRVLSSVSNVEIKESDGKTKTNLIGILQRFLDGDHVVPIIEEMGAGTVGGFIKRQQSKVVQNKVVYYGVGIWRGFMDGYQVHLEIENDIGQPPRLRNVTTNCQSSPWDLSIPIRQWAEDMGVTNNQDYSSKSSRGARYWMHSFRMQGPSKPFGCPVYIIKGDMSDVIRLRKEEVEMKVRGSTLNLYTKHHSHQDLHILSYTASDNDLSPGIFKSISDEGVAQALQLFEREPSNCWVRCESVAPKFISAILEICEGKRQIRGINRTRLSEIVRICSESSLRSKVGSMFSFVANVEEAHDVDYDALMDLMIEDAKNNAFSHVVDCIELDVSGPYEMESFDTSDVNLFGPAHYKDISSLSMIAHPLMDKFVDYAISKMGRASVRKVLETGRCSSKDYDLSKVLFRTLQRPEESIRIDDLELYEETDVADDMLG.

The tract at residues 18–215 (VPIKHFDCTM…ELSSTDEELG (198 aa)) is endonuclease. Mn(2+) is bound by residues His79, Asp111, and Glu125. The For endonuclease activity role is filled by Lys143. Positions 975 to 1166 (ARKQCKGPVW…AICFRMKKEL (192 aa)) constitute a RdRp catalytic domain. Residue Asp1134 participates in Mg(2+) binding. The cap-binding stretch occupies residues 1706-1822 (GAGTVGGFIK…PFGCPVYIIK (117 aa)).

This sequence belongs to the Bunyavirales RNA polymerase family. As to quaternary structure, homomultimer. Interacts with glycoprotein N; this interaction allows efficient polymerase packaging into virus particles. Interacts with nucleoprotein N. It depends on Mn(2+) as a cofactor. Mg(2+) serves as cofactor.

The protein resides in the host Golgi apparatus. It localises to the host endoplasmic reticulum. It is found in the host endoplasmic reticulum-Golgi intermediate compartment. Its subcellular location is the virion. The enzyme catalyses RNA(n) + a ribonucleoside 5'-triphosphate = RNA(n+1) + diphosphate. In terms of biological role, RNA-dependent RNA polymerase, which is responsible for the replication and transcription of the viral RNA genome using antigenomic RNA as an intermediate. During transcription, synthesizes subgenomic RNAs and assures their capping by a cap-snatching mechanism, which involves the endonuclease activity cleaving the host capped pre-mRNAs. These short capped RNAs are then used as primers for viral transcription. The 3'-end of subgenomic mRNAs molecules are not polyadenylated. During replication, the polymerase binds the 5' and 3' vRNA extremities at distinct sites. In turn, significant conformational changes occur in the polymerase and in vRNA to initiate active RNA synthesis. As a consequence of the use of the same enzyme for both transcription and replication, these mechanisms need to be well coordinated. The protein is RNA-directed RNA polymerase L of Aedes (Bovine).